The primary structure comprises 374 residues: DNA replication and repair protein RecF (374 aa).

An ATP-binding site is contributed by 34 to 41 (GNNGAGKT).

Belongs to the RecF family.

Its subcellular location is the cytoplasm. In terms of biological role, the RecF protein is involved in DNA metabolism; it is required for DNA replication and normal SOS inducibility. RecF binds preferentially to single-stranded, linear DNA. It also seems to bind ATP. This is DNA replication and repair protein RecF from Rhizobium etli (strain CIAT 652).